We begin with the raw amino-acid sequence, 149 residues long: Transthyretin (149 aa).

Positions 1-20 (MAFHSLLLLCLAGLVFLSEA) are cleaved as a signal peptide. Residue cysteine 32 is modified to Sulfocysteine. Lysine 37 is an L-thyroxine binding site. Glutamate 64 is modified (4-carboxyglutamate). Glutamate 76 and serine 139 together coordinate L-thyroxine.

The protein belongs to the transthyretin family. In terms of assembly, homotetramer. Dimer of dimers. In the homotetramer, subunits assemble around a central channel that can accommodate two ligand molecules. Interacts with RBP4. Sulfonation of the reactive cysteine Cys-32 enhances the stability of the native conformation of TTR, avoiding misassembly of the protein leading to amyloid formation. As to expression, highly expressed in the choroid plexus.

It is found in the secreted. In terms of biological role, thyroid hormone-binding protein. Probably transports thyroxine from the bloodstream to the brain. The chain is Transthyretin (TTR) from Sminthopsis macroura (Stripe-faced dunnart).